A 251-amino-acid polypeptide reads, in one-letter code: Early E1A protein (251 aa).

The segment at 38 to 46 (ISLHNLFDV) is interaction with RB1 in competition with E2F1. An interaction with UBE2I region spans residues 74-136 (SADSGAASGD…NYVNIAEGAS (63 aa)). Residues 97–101 (LKCYE) carry the LXCXE motif, interaction with host RB1 and TMEM173/STING motif. The tract at residues 102-122 (EGLPPSGSEADEAEERAEEEE) is disordered. Acidic residues predominate over residues 110–122 (EADEAEERAEEEE). A zinc finger lies at 150–170 (CRACDFHRGSSGNPEAMCALC). The short motif at 240-244 (PLNLS) is the PXDLS motif, CTBP-binding element. Positions 246–250 (KRPKS) match the Nuclear localization signal motif.

The protein belongs to the adenoviridae E1A protein family. In terms of assembly, interacts with host UBE2I; this interaction interferes with polySUMOylation. Interacts with host RB1; this interaction induces the aberrant dissociation of RB1-E2F1 complex thereby disrupting the activity of RB1 and activating E2F1-regulated genes. Interacts with host ATF7; the interaction enhances ATF7-mediated viral transactivation activity which requires the zinc binding domains of both proteins. Isoform early E1A 32 kDa protein and isoform early E1A 26 kDa protein interact (via N-terminus) with CUL1 and E3 ubiquitin ligase RBX1; these interactions inhibit RBX1-CUL1-dependent elongation reaction of ubiquitin chains and attenuate ubiquitination of SCF(FBXW7) target proteins. Interacts (via PXLXP motif) with host ZMYND11/BS69 (via MYND-type zinc finger); this interaction inhibits E1A mediated transactivation. Interacts with host EP300; this interaction stimulates the acetylation of RB1 by recruiting EP300 and RB1 into a multimeric-protein complex. Interacts with host CTBP1 and CTBP2; this interaction seems to potentiate viral replication. Interacts with host DCAF7. Interacts with host DYRK1A. Interacts with host KPNA4; this interaction allows E1A import into the host nucleus. Interacts with host EP400; this interaction stabilizes MYC. Interacts with host TBP protein; this interaction probably disrupts the TBP-TATA complex. Interacts (via LXCXE motif) with host TMEM173/STING; this interaction impairs the ability of TMEM173/STING to sense cytosolic DNA and promote the production of type I interferon (IFN-alpha and IFN-beta). Interacts (via C-terminus) with host ZBED1/hDREF (via C-terminus); the interaction is direct.

It is found in the host nucleus. In terms of biological role, plays a role in viral genome replication by driving entry of quiescent cells into the cell cycle. Stimulation of progression from G1 to S phase allows the virus to efficiently use the cellular DNA replicating machinery to achieve viral genome replication. E1A protein has both transforming and trans-activating activities. Induces the disassembly of the E2F1 transcription factor from RB1 by direct competition for the same binding site on RB1, with subsequent transcriptional activation of E2F1-regulated S-phase genes and of the E2 region of the adenoviral genome. Release of E2F1 leads to the ARF-mediated inhibition of MDM2 and causes TP53/p53 to accumulate because it is not targeted for degradation by MDM2-mediated ubiquitination anymore. This increase in TP53, in turn, would arrest the cell proliferation and direct its death but this effect is counteracted by the viral protein E1B-55K. Inactivation of the ability of RB1 to arrest the cell cycle is critical for cellular transformation, uncontrolled cellular growth and proliferation induced by viral infection. Interaction with RBX1 and CUL1 inhibits ubiquitination of the proteins targeted by SCF(FBXW7) ubiquitin ligase complex, and may be linked to unregulated host cell proliferation. The tumorigenesis-restraining activity of E1A may be related to the disruption of the host CtBP-CtIP complex through the CtBP binding motif. Interaction with host TMEM173/STING impairs the ability of TMEM173/STING to sense cytosolic DNA and promote the production of type I interferon (IFN-alpha and IFN-beta). Promotes the sumoylation of host ZBED1/hDREF with SUMO1. The polypeptide is Early E1A protein (Human adenovirus F serotype 41 (HAdV-41)).